The sequence spans 610 residues: Dihydroxy-acid dehydratase (610 aa).

Asp-81 provides a ligand contact to Mg(2+). Cys-122 contributes to the [2Fe-2S] cluster binding site. Residues Asp-123 and Lys-124 each contribute to the Mg(2+) site. The residue at position 124 (Lys-124) is an N6-carboxylysine. Cys-196 provides a ligand contact to [2Fe-2S] cluster. Glu-492 contributes to the Mg(2+) binding site. The Proton acceptor role is filled by Ser-518.

The protein belongs to the IlvD/Edd family. In terms of assembly, homodimer. The cofactor is [2Fe-2S] cluster. Mg(2+) serves as cofactor.

It catalyses the reaction (2R)-2,3-dihydroxy-3-methylbutanoate = 3-methyl-2-oxobutanoate + H2O. It carries out the reaction (2R,3R)-2,3-dihydroxy-3-methylpentanoate = (S)-3-methyl-2-oxopentanoate + H2O. It functions in the pathway amino-acid biosynthesis; L-isoleucine biosynthesis; L-isoleucine from 2-oxobutanoate: step 3/4. The protein operates within amino-acid biosynthesis; L-valine biosynthesis; L-valine from pyruvate: step 3/4. Its function is as follows. Functions in the biosynthesis of branched-chain amino acids. Catalyzes the dehydration of (2R,3R)-2,3-dihydroxy-3-methylpentanoate (2,3-dihydroxy-3-methylvalerate) into 2-oxo-3-methylpentanoate (2-oxo-3-methylvalerate) and of (2R)-2,3-dihydroxy-3-methylbutanoate (2,3-dihydroxyisovalerate) into 2-oxo-3-methylbutanoate (2-oxoisovalerate), the penultimate precursor to L-isoleucine and L-valine, respectively. In Ruegeria pomeroyi (strain ATCC 700808 / DSM 15171 / DSS-3) (Silicibacter pomeroyi), this protein is Dihydroxy-acid dehydratase.